Here is a 372-residue protein sequence, read N- to C-terminus: uncharacterized protein (372 aa).

Residues lysine 328–glutamine 353 form a disordered region.

Functionally, induces the SOS system when expressed in E.coli, therefore, it may play a role in DNA metabolism and/or in genome stability. This is an uncharacterized protein from Saccharomyces cerevisiae (strain ATCC 204508 / S288c) (Baker's yeast).